Consider the following 124-residue polypeptide: Small ribosomal subunit protein uS12c (124 aa).

Belongs to the universal ribosomal protein uS12 family. As to quaternary structure, part of the 30S ribosomal subunit.

It localises to the plastid. Its function is as follows. With S4 and S5 plays an important role in translational accuracy. Located at the interface of the 30S and 50S subunits. The polypeptide is Small ribosomal subunit protein uS12c (rps12) (Helicosporidium sp. subsp. Simulium jonesii (Green alga)).